Consider the following 261-residue polypeptide: uncharacterized protein (261 aa).

41–48 contacts ATP; sequence GKSGSGKS.

This sequence belongs to the IIV-6 075L family.

This is an uncharacterized protein from Invertebrate iridescent virus 3 (IIV-3).